The sequence spans 204 residues: uncharacterized protein (204 aa).

Disordered regions lie at residues 1 to 37 and 159 to 204; these read MRAL…GSVS and GYRP…DGEL. Positions 28 to 37 are enriched in low complexity; the sequence is GRGPRAGSVS. In terms of domain architecture, WGR spans 88-175; the sequence is PYRLYVERLD…LPKEKWPAEA (88 aa). Basic and acidic residues-rich tracts occupy residues 166-179 and 188-204; these read LPKE…EHES and PEGH…DGEL.

This is an uncharacterized protein from Sinorhizobium fredii (strain NBRC 101917 / NGR234).